Here is a 212-residue protein sequence, read N- to C-terminus: 2,3-bisphosphoglycerate-dependent phosphoglycerate mutase (212 aa).

Residues 9–16 (RHGQSEWN), 22–23 (TG), R61, 88–91 (ERDY), K99, 115–116 (RR), and 159–160 (GN) each bind substrate. H10 (tele-phosphohistidine intermediate) is an active-site residue. E88 functions as the Proton donor/acceptor in the catalytic mechanism.

The protein belongs to the phosphoglycerate mutase family. BPG-dependent PGAM subfamily. In terms of assembly, homodimer.

It carries out the reaction (2R)-2-phosphoglycerate = (2R)-3-phosphoglycerate. It participates in carbohydrate degradation; glycolysis; pyruvate from D-glyceraldehyde 3-phosphate: step 3/5. Functionally, catalyzes the interconversion of 2-phosphoglycerate and 3-phosphoglycerate. The polypeptide is 2,3-bisphosphoglycerate-dependent phosphoglycerate mutase (Methylorubrum populi (strain ATCC BAA-705 / NCIMB 13946 / BJ001) (Methylobacterium populi)).